Consider the following 287-residue polypeptide: Pantothenate synthetase (287 aa).

Residue 30–37 coordinates ATP; that stretch reads MGNLHSGH. The active-site Proton donor is His37. Gln61 contributes to the (R)-pantoate binding site. Position 61 (Gln61) interacts with beta-alanine. 149-152 serves as a coordination point for ATP; that stretch reads GEKD. Gln155 contacts (R)-pantoate. Residues Val178 and 186 to 189 contribute to the ATP site; that span reads LSSR.

This sequence belongs to the pantothenate synthetase family. As to quaternary structure, homodimer.

It is found in the cytoplasm. The catalysed reaction is (R)-pantoate + beta-alanine + ATP = (R)-pantothenate + AMP + diphosphate + H(+). Its pathway is cofactor biosynthesis; (R)-pantothenate biosynthesis; (R)-pantothenate from (R)-pantoate and beta-alanine: step 1/1. In terms of biological role, catalyzes the condensation of pantoate with beta-alanine in an ATP-dependent reaction via a pantoyl-adenylate intermediate. The chain is Pantothenate synthetase from Pseudomonas putida (strain W619).